Consider the following 147-residue polypeptide: Small ribosomal subunit protein uS12 (147 aa).

It belongs to the universal ribosomal protein uS12 family. Part of the 30S ribosomal subunit.

Its function is as follows. With S4 and S5 plays an important role in translational accuracy. Located at the interface of the 30S and 50S subunits. The protein is Small ribosomal subunit protein uS12 of Pyrobaculum islandicum (strain DSM 4184 / JCM 9189 / GEO3).